A 284-amino-acid polypeptide reads, in one-letter code: L-ribulose-5-phosphate 3-epimerase UlaE (284 aa).

This sequence belongs to the L-ribulose-5-phosphate 3-epimerase family.

It catalyses the reaction L-ribulose 5-phosphate = L-xylulose 5-phosphate. The protein operates within cofactor degradation; L-ascorbate degradation; D-xylulose 5-phosphate from L-ascorbate: step 3/4. Its function is as follows. Catalyzes the isomerization of L-xylulose-5-phosphate to L-ribulose-5-phosphate. Is involved in the anaerobic L-ascorbate utilization. The polypeptide is L-ribulose-5-phosphate 3-epimerase UlaE (Shigella sonnei (strain Ss046)).